Reading from the N-terminus, the 465-residue chain is MSFLVAIVGRANVGKSTLFNVLTNSHDALVFDFEGVTRDRQYGQAKYDDLDYLVVDTGGISDKDVGFDEFMAKQSQIAIDEANLVFFVVDGRSGLTTGDEYVASLLRQKDKKVVVVVNKVDGTDEEAAMAEFYSFGFDKVFAISAAHRRNTQKLVDKFLKKPLNEYYQDYTQTQEHKEQQRHGIHFSLIGRPNVGKSTLTNRMLGEDRVVVFDMPGTTIDSVSIPFERHGQKYTIVDTAGVRKRGKVKQTLEKFSVIKTLQAIQDSNVVVAVVDARQGISDQDLSLIHFAIKNGRALVLAVNKWDGMTEEDRIQVKQDLKRKLFFLQDYVDIHFISALHGTNVGHVFESIDTAYACANKKITTADATCLMQLAVEAHSLPMVGKFRIKLKYAHVGGHNPPVIVIHGNQVSRLPNSYKRYLENFFREALDFRGTPIVFEFKQSENPFADRKNKRSKDEGSKSKKVK.

EngA-type G domains are found at residues 3 to 166 and 184 to 358; these read FLVA…LNEY and IHFS…ACAN. GTP contacts are provided by residues 9–16, 56–60, 118–121, 190–197, 237–241, and 302–305; these read GRANVGKS, DTGGI, NKVD, GRPNVGKS, DTAGV, and NKWD. The KH-like domain maps to 359–443; sequence KKITTADATC…PIVFEFKQSE (85 aa). The segment at 446–465 is disordered; sequence FADRKNKRSKDEGSKSKKVK.

This sequence belongs to the TRAFAC class TrmE-Era-EngA-EngB-Septin-like GTPase superfamily. EngA (Der) GTPase family. Associates with the 50S ribosomal subunit.

Its function is as follows. GTPase that plays an essential role in the late steps of ribosome biogenesis. The polypeptide is GTPase Der (Francisella tularensis subsp. mediasiatica (strain FSC147)).